The chain runs to 150 residues: Large ribosomal subunit protein bL9 (150 aa).

This sequence belongs to the bacterial ribosomal protein bL9 family.

Functionally, binds to the 23S rRNA. This chain is Large ribosomal subunit protein bL9, found in Pseudarthrobacter chlorophenolicus (strain ATCC 700700 / DSM 12829 / CIP 107037 / JCM 12360 / KCTC 9906 / NCIMB 13794 / A6) (Arthrobacter chlorophenolicus).